Here is a 632-residue protein sequence, read N- to C-terminus: Extracellular metalloproteinase 2 (632 aa).

A signal peptide spans 1–19; that stretch reads MHGLLLAGLAAALPLGVAG. Residues 20–244 constitute a propeptide that is removed on maturation; sequence LPARQQSGLS…VHNVVDYVAS (225 aa). N-linked (GlcNAc...) asparagine glycosylation occurs at N270. Residue H429 participates in Zn(2+) binding. E430 is a catalytic residue. H433 contacts Zn(2+).

The protein belongs to the peptidase M36 family. Zn(2+) is required as a cofactor.

It is found in the secreted. Secreted metalloproteinase probably acting as a virulence factor. This is Extracellular metalloproteinase 2 (MEP2) from Arthroderma benhamiae (Trichophyton mentagrophytes).